Consider the following 513-residue polypeptide: Probable G-protein coupled receptor 176 (513 aa).

A disordered region spans residues M1–A25. Residues M1–Q41 are Extracellular-facing. N4, N11, N17, and N26 each carry an N-linked (GlcNAc...) asparagine glycan. The helical transmembrane segment at F42–S64 threads the bilayer. Residues T65 to R77 are Cytoplasmic-facing. A helical transmembrane segment spans residues F78–I98. The Extracellular segment spans residues I99–W108. A helical membrane pass occupies residues W109–V129. At T130–K157 the chain is on the cytoplasmic side. The helical transmembrane segment at S158–F177 threads the bilayer. Topologically, residues A178–Y204 are extracellular. A helical membrane pass occupies residues V205–I225. The Cytoplasmic segment spans residues L226 to H264. A helical transmembrane segment spans residues A265–V285. Residues V286–L301 lie on the Extracellular side of the membrane. A helical membrane pass occupies residues L302–V322. Over N323–S513 the chain is Cytoplasmic. A disordered region spans residues V404 to V432.

Belongs to the G-protein coupled receptor 1 family. Expressed in brain, lung, heart, stomach, intestine, cultured aortic smooth muscle cells and cardiac myocytes.

It localises to the cell membrane. In terms of biological role, orphan receptor involved in normal circadian rhythm behavior. Acts through the G-protein subclass G(z)-alpha and has an agonist-independent basal activity to repress cAMP production. The polypeptide is Probable G-protein coupled receptor 176 (Gpr176) (Rattus norvegicus (Rat)).